A 575-amino-acid polypeptide reads, in one-letter code: Transcription factor COE2 (575 aa).

Positions 62–65 are interaction with DNA; the sequence is RKSN. A C5-type zinc finger spans residues 150–169; it reads CRVLLTHEVMCSRCCEKKSC. Interaction with DNA regions lie at residues 196-203 and 235-238; these read NCLKTAGN and NNSK. The IPT/TIG domain occupies 253–336; it reads PCIKAISPSE…KGAPGRFIYT (84 aa). Residues 441 to 453 show a composition bias toward polar residues; sequence STQGNNQGYIRNT. A disordered region spans residues 441-479; it reads STQGNNQGYIRNTSSISPRGYSSSSTPQQSNYSTSSNSM. The segment covering 454-479 has biased composition (low complexity); that stretch reads SSISPRGYSSSSTPQQSNYSTSSNSM.

The protein belongs to the COE family. In terms of assembly, forms either a homodimer or a heterodimer with a related family member. Interacts with SIX1.

The protein localises to the nucleus. Transcription factor that, in osteoblasts, activates the decoy receptor for RANKL, TNFRSF11B, which in turn regulates osteoclast differentiation. Acts in synergy with the Wnt-responsive LEF1/CTNNB1 pathway. Recognizes variations of the palindromic sequence 5'-ATTCCCNNGGGAATT-3'. This is Transcription factor COE2 (EBF2) from Bos taurus (Bovine).